Reading from the N-terminus, the 723-residue chain is Threonine--tRNA ligase 1, cytoplasmic (723 aa).

Positions 1–10 (MSEEQASSPS) are enriched in polar residues. Residues 1 to 49 (MSEEQASSPSAKMGDEEKPVGAGEEKQKEGSKKKNKEGSGDGGRAELNP) are disordered. Residues 13–39 (MGDEEKPVGAGEEKQKEGSKKKNKEGS) show a composition bias toward basic and acidic residues. Residue serine 39 is modified to Phosphoserine. Residues 79–143 (DSKPIKVTLP…EEDCTLELLK (65 aa)) enclose the TGS domain. The residue at position 243 (lysine 243) is an N6-acetyllysine. The residue at position 246 (threonine 246) is a Phosphothreonine. A Phosphotyrosine modification is found at tyrosine 298. Threonine 453 is modified (phosphothreonine). A Phosphoserine modification is found at serine 702.

The protein belongs to the class-II aminoacyl-tRNA synthetase family. As to quaternary structure, homodimer. In terms of processing, ISGylated.

Its subcellular location is the cytoplasm. It catalyses the reaction tRNA(Thr) + L-threonine + ATP = L-threonyl-tRNA(Thr) + AMP + diphosphate + H(+). Catalyzes the attachment of threonine to tRNA(Thr) in a two-step reaction: threonine is first activated by ATP to form Thr-AMP and then transferred to the acceptor end of tRNA(Thr). Also edits incorrectly charged tRNA(Thr) via its editing domain, at the post-transfer stage. The protein is Threonine--tRNA ligase 1, cytoplasmic (TARS1) of Bos taurus (Bovine).